The sequence spans 306 residues: Recombination-associated protein RdgC (306 aa).

This sequence belongs to the RdgC family.

Its subcellular location is the cytoplasm. The protein resides in the nucleoid. Its function is as follows. May be involved in recombination. This Pseudomonas syringae pv. syringae (strain B728a) protein is Recombination-associated protein RdgC.